The sequence spans 96 residues: MGSGYAKKKKEAKIMEQQFLEMEASLEQKRYEGQAGNGLVSVVINGKCDIVSIKVQPTCLDPEEPEVVEDLFRSAFKEAKEAMDKEMSVMRAGMPF.

Belongs to the YbaB/EbfC family. Homodimer.

It localises to the cytoplasm. It is found in the nucleoid. Functionally, binds to DNA and alters its conformation. May be involved in regulation of gene expression, nucleoid organization and DNA protection. The protein is Nucleoid-associated protein CCA_00330 of Chlamydia caviae (strain ATCC VR-813 / DSM 19441 / 03DC25 / GPIC) (Chlamydophila caviae).